Consider the following 304-residue polypeptide: Glutaminase (304 aa).

Substrate is bound by residues Ser63, Asn113, Glu157, Asn164, Tyr188, Tyr240, and Val258.

Belongs to the glutaminase family. Homotetramer.

It catalyses the reaction L-glutamine + H2O = L-glutamate + NH4(+). The sequence is that of Glutaminase from Ralstonia nicotianae (strain ATCC BAA-1114 / GMI1000) (Ralstonia solanacearum).